A 670-amino-acid polypeptide reads, in one-letter code: Solute carrier organic anion transporter family member 1A5 (670 aa).

The Cytoplasmic segment spans residues 1 to 20 (MGETEKRVATHEVRCFSKIK). A helical transmembrane segment spans residues 21 to 40 (MFLLALTWAYVSKSLSGIYM). Residues 41–59 (NTMLTQIERQFDIPTSIVG) lie on the Extracellular side of the membrane. The helical transmembrane segment at 60–80 (FINGSFEIGNLLLIIFVSYFG) threads the bilayer. The Cytoplasmic portion of the chain corresponds to 81-86 (TKLHRP). A helical transmembrane segment spans residues 87–111 (IMIGVGCVIMGLGCFLMSLPHFLMG). Residues 112 to 155 (RYEYETTISPTSNLSSNSFLCMENRSQTLKPTQDPAECIKEMKS) are Extracellular-facing. N-linked (GlcNAc...) asparagine glycosylation is found at asparagine 124 and asparagine 135. The helical transmembrane segment at 156-184 (LMWIYVLVGNIIRGIGETPIMPLGISYIE) threads the bilayer. The Cytoplasmic segment spans residues 185 to 203 (DFAKSENSPLYIGILETGK). A helical transmembrane segment spans residues 204-224 (VFGPIVGLLLGSFCASIYVDT). Residues 225 to 242 (GSVNTDDLTITPTDTRWV) are Extracellular-facing. A helical transmembrane segment spans residues 243–267 (GAWWIGFLICAGVNILSSIPFFFFP). Over 268–311 (KTLPKEGLQDDVDGTNNDKEEKHREKAKEENRGITKDFLPFMKS) the chain is Cytoplasmic. A helical membrane pass occupies residues 312–333 (LSCNPIYMLLILTSVLQINAFI). Residues 334–353 (NMFTFLPKYLEQQYGKSTAE) lie on the Extracellular side of the membrane. The helical transmembrane segment at 354-377 (VVLLIGVYNLPPICIGYLLIGFIM) threads the bilayer. The Cytoplasmic portion of the chain corresponds to 378–381 (KKFK). The helical transmembrane segment at 382-405 (ITVKKAAYMAFCLSLFEYLLYFLH) threads the bilayer. Topologically, residues 406–513 (FMITCDNFPV…PECANKLQYF (108 aa)) are extracellular. The region spanning 433 to 488 (NKVLADCNRGCSCSTNSWDPVCGDNGLAYMSACLAGCKKSVGTGTNMVFQNCSCIR) is the Kazal-like domain. 3 disulfides stabilise this stretch: cysteine 439-cysteine 469, cysteine 445-cysteine 465, and cysteine 454-cysteine 486. Asparagine 483 and asparagine 492 each carry an N-linked (GlcNAc...) asparagine glycan. A helical transmembrane segment spans residues 514–536 (LIMSVIGSFIYSITAIPGYMVLL). The Cytoplasmic segment spans residues 537-545 (RCIKPEEKS). Residues 546-571 (LGIGLHAFCTRVFAGIPAPIYFGALI) traverse the membrane as a helical segment. Over 572-605 (DRTCLHWGTLKCGEPGACRMYNINNFRRIYLVLP) the chain is Extracellular. Residues 606-623 (AALRGSSYLPALFILILM) traverse the membrane as a helical segment. Topologically, residues 624-670 (RKFQFPGEIDSSETELAEMKITVKKSECTDVHGSPQVENDGELKTRL) are cytoplasmic.

Belongs to the organo anion transporter (TC 2.A.60) family. As to expression, highly expressed in the kidney, moderately abundant in the retina, and even lower in the liver. Expressed (at protein level) in the small intestine. Expressed at lower levels in brain,lung, and retina.

It localises to the cell membrane. It is found in the basal cell membrane. The catalysed reaction is taurocholate(out) = taurocholate(in). It catalyses the reaction glycocholate(out) = glycocholate(in). The enzyme catalyses taurochenodeoxycholate(out) = taurochenodeoxycholate(in). It carries out the reaction tauroursodeoxycholate(out) = tauroursodeoxycholate(in). The catalysed reaction is 3,3',5'-triiodo-L-thyronine(out) = 3,3',5'-triiodo-L-thyronine(in). It catalyses the reaction L-thyroxine(out) = L-thyroxine(in). The enzyme catalyses taurodeoxycholate(out) = taurodeoxycholate(in). It carries out the reaction glycodeoxycholate(out) = glycodeoxycholate(in). The catalysed reaction is glycochenodeoxycholate(out) = glycochenodeoxycholate(in). It catalyses the reaction glycoursodeoxycholate(out) = glycoursodeoxycholate(in). The enzyme catalyses estrone 3-sulfate(out) = estrone 3-sulfate(in). It carries out the reaction prostaglandin E2(out) = prostaglandin E2(in). The catalysed reaction is substance P(out) = substance P(in). In terms of biological role, na(+)-independent transporter that mediates the cellular uptake of a broad range of organic anions such as the endogenous bile salts cholate and deoxycholate, either in their unconjugated or conjugated forms (taurocholate and glycocholate), estrone 3-sulfate and prostaglandin E2, at the plasma membrane. Responsible for intestinal absorption of bile acids. Capable of thyroid hormone transport (both T3 or 3,3',5'-triiodo-L-thyronine, and T4 or L-tyroxine). Plays roles in blood-brain and -cerebrospinal fluid barrier transport of organic anions and signal mediators, and in hormone uptake by neural cells. May also play a role in the reuptake of neuropeptides such as substance P/TAC1 and vasoactive intestinal peptide/VIP released from retinal neurons. Shows a pH-sensitive substrate specificity which may be ascribed to the protonation state of the binding site and leads to a stimulation of substrate transport in an acidic microenvironment. Hydrogencarbonate/HCO3(-) acts as the probable counteranion that exchanges for organic anions. May contribute to regulate the transport of organic compounds in testis across the blood-testis-barrier. This chain is Solute carrier organic anion transporter family member 1A5 (Slco1a5), found in Rattus norvegicus (Rat).